We begin with the raw amino-acid sequence, 402 residues long: Serine/threonine-protein phosphatase 4 regulatory subunit 2 (402 aa).

The span at 206-248 shows a compositional bias: acidic residues; sequence MDEEFEDEDYEDHEDEEEDEEDEDNDSDVDEMEAEEVEEDASD. 3 disordered regions span residues 206 to 270, 291 to 311, and 331 to 402; these read MDEE…DVTD, SVLS…ILSR, and GFIT…KKRM. Residues 348–358 are compositionally biased toward low complexity; sequence SSSSMVSPVVS. A compositionally biased stretch (polar residues) spans 371–396; it reads INTFISPDTTNSVTQAEKNELSTSPL.

This sequence belongs to the PPP4R2 family. As to quaternary structure, regulatory subunit (R2) of the histone H2A phosphatase complex (HTP-C) consisting of PPH3, PSY2 and PSY4.

The protein localises to the nucleus. In terms of biological role, regulatory subunit of the histone H2A phosphatase complex, which dephosphorylates H2AS128ph (gamma-H2A) that has been displaced from sites of DNA lesions in the double-stranded DNA break repair process. Dephosphorylation is necessary for efficient recovery from the DNA damage checkpoint. This Kluyveromyces lactis (strain ATCC 8585 / CBS 2359 / DSM 70799 / NBRC 1267 / NRRL Y-1140 / WM37) (Yeast) protein is Serine/threonine-protein phosphatase 4 regulatory subunit 2 (PSY4).